A 419-amino-acid polypeptide reads, in one-letter code: Oxamate carbamoyltransferase subunit AllG (419 aa).

It belongs to the AllG family. As to quaternary structure, the OXTCase is composed of 3 subunits, AllF, AllG and AllH. Requires Mg(2+) as cofactor.

The enzyme catalyses oxamate + carbamoyl phosphate = N-carbamoyl-2-oxoglycine + phosphate. Its pathway is nitrogen metabolism; (S)-allantoin degradation. In terms of biological role, component of a carbamoyltransferase involved in the anaerobic nitrogen utilization via the assimilation of allantoin. Catalyzes the conversion of oxalurate (N-carbamoyl-2-oxoglycine) to oxamate and carbamoyl phosphate. In Escherichia coli (strain K12), this protein is Oxamate carbamoyltransferase subunit AllG.